The chain runs to 399 residues: Proteasome-activating nucleotidase (399 aa).

Residues 19 to 60 are a coiled coil; it reads ITYLKRRIRQLELQVRMLEADKERLERELSRLRSEMSRLRQP. Residues 184 to 189 and histidine 323 each bind ATP; that span reads GCGKTL. Residues 397 to 399 are docks into pockets in the proteasome alpha-ring to cause gate opening; sequence IYG.

It belongs to the AAA ATPase family. In terms of assembly, homohexamer. The hexameric complex has a two-ring architecture resembling a top hat that caps the 20S proteasome core at one or both ends. Upon ATP-binding, the C-terminus of PAN interacts with the alpha-rings of the proteasome core by binding to the intersubunit pockets.

The protein resides in the cytoplasm. ATPase which is responsible for recognizing, binding, unfolding and translocation of substrate proteins into the archaeal 20S proteasome core particle. Is essential for opening the gate of the 20S proteasome via an interaction with its C-terminus, thereby allowing substrate entry and access to the site of proteolysis. Thus, the C-termini of the proteasomal ATPase function like a 'key in a lock' to induce gate opening and therefore regulate proteolysis. Unfolding activity requires energy from ATP hydrolysis, whereas ATP binding alone promotes ATPase-20S proteasome association which triggers gate opening, and supports translocation of unfolded substrates. This is Proteasome-activating nucleotidase from Pyrococcus horikoshii (strain ATCC 700860 / DSM 12428 / JCM 9974 / NBRC 100139 / OT-3).